The chain runs to 354 residues: Protein PHLOEM PROTEIN 2-LIKE A8 (354 aa).

The region spanning 12–179 (TGPQVFINFR…EMILEIQKAL (168 aa)) is the TIR domain. E86 is a catalytic residue.

The enzyme catalyses NAD(+) + H2O = ADP-D-ribose + nicotinamide + H(+). The sequence is that of Protein PHLOEM PROTEIN 2-LIKE A8 (PP2A8) from Arabidopsis thaliana (Mouse-ear cress).